A 138-amino-acid chain; its full sequence is Nucleoside diphosphate kinase (138 aa).

ATP contacts are provided by Lys9, Phe57, Arg85, Thr91, Arg102, and Asn112. His115 serves as the catalytic Pros-phosphohistidine intermediate.

The protein belongs to the NDK family. Homotetramer. Mg(2+) is required as a cofactor.

The protein resides in the cytoplasm. It catalyses the reaction a 2'-deoxyribonucleoside 5'-diphosphate + ATP = a 2'-deoxyribonucleoside 5'-triphosphate + ADP. The enzyme catalyses a ribonucleoside 5'-diphosphate + ATP = a ribonucleoside 5'-triphosphate + ADP. Major role in the synthesis of nucleoside triphosphates other than ATP. The ATP gamma phosphate is transferred to the NDP beta phosphate via a ping-pong mechanism, using a phosphorylated active-site intermediate. The sequence is that of Nucleoside diphosphate kinase from Deinococcus geothermalis (strain DSM 11300 / CIP 105573 / AG-3a).